A 393-amino-acid polypeptide reads, in one-letter code: NAD(P)H-quinone oxidoreductase subunit H, chloroplastic (393 aa).

The protein belongs to the complex I 49 kDa subunit family. As to quaternary structure, NDH is composed of at least 16 different subunits, 5 of which are encoded in the nucleus.

It localises to the plastid. Its subcellular location is the chloroplast thylakoid membrane. The enzyme catalyses a plastoquinone + NADH + (n+1) H(+)(in) = a plastoquinol + NAD(+) + n H(+)(out). It carries out the reaction a plastoquinone + NADPH + (n+1) H(+)(in) = a plastoquinol + NADP(+) + n H(+)(out). Its function is as follows. NDH shuttles electrons from NAD(P)H:plastoquinone, via FMN and iron-sulfur (Fe-S) centers, to quinones in the photosynthetic chain and possibly in a chloroplast respiratory chain. The immediate electron acceptor for the enzyme in this species is believed to be plastoquinone. Couples the redox reaction to proton translocation, and thus conserves the redox energy in a proton gradient. The sequence is that of NAD(P)H-quinone oxidoreductase subunit H, chloroplastic from Oryza nivara (Indian wild rice).